A 256-amino-acid polypeptide reads, in one-letter code: tRNA pseudouridine synthase A 1 (256 aa).

Aspartate 53 functions as the Nucleophile in the catalytic mechanism. Tyrosine 111 contributes to the substrate binding site.

Belongs to the tRNA pseudouridine synthase TruA family. In terms of assembly, homodimer.

It carries out the reaction uridine(38/39/40) in tRNA = pseudouridine(38/39/40) in tRNA. Formation of pseudouridine at positions 38, 39 and 40 in the anticodon stem and loop of transfer RNAs. This is tRNA pseudouridine synthase A 1 from Protochlamydia amoebophila (strain UWE25).